A 419-amino-acid chain; its full sequence is MAALCGGMLRGCILKPLGLSGSLQLKRNVRALRRTPVRVIQADEEGRERKQVEASRQRQPRQNESQACKAVGVSPATVDIEAPAHEFRYERALPGDKRLSKVVTIAKSKKFRDRHGQVLLEGQRLLTDALDSGAVLQTLFFSRVDYLKEFPPDKLRKTNLIKVNFENIKIWSDLVTPQGLMGIFAKPDHVKMTYPDTQTKHTLPLSLICDNIRDPGNLGTILRCAAGAGCSKVLLTKGCVDAWEPKVLRAGMGAHFRLPIITSLDWDIVPNYLPAGTKVFLADNFRPDNQNKPAEVSEKASDYGWVATDPKRIFITEDGYESSSDEEDNTDKLYIPGLEVQSYFERWAQGPCAVVIGGETHGLSIESLLLAEKSNGKRLNIPVVPGIDSLNSAMAASILLFEGKRQIENTMKRKSCVTE.

The N-terminal 39 residues, 1–39 (MAALCGGMLRGCILKPLGLSGSLQLKRNVRALRRTPVRV), are a transit peptide targeting the mitochondrion. The tract at residues 42–68 (ADEEGRERKQVEASRQRQPRQNESQAC) is disordered. Positions 44 to 56 (EEGRERKQVEASR) are enriched in basic and acidic residues. Positions 357, 381, and 390 each coordinate S-adenosyl-L-methionine.

Belongs to the class IV-like SAM-binding methyltransferase superfamily. RNA methyltransferase TrmH family.

The protein resides in the mitochondrion. It catalyses the reaction a uridine in rRNA + S-adenosyl-L-methionine = a 2'-O-methyluridine in rRNA + S-adenosyl-L-homocysteine + H(+). S-adenosyl-L-methionine-dependent 2'-O-ribose methyltransferase that catalyzes the formation of 2'-O-methylguanosine at position 1370 (Gm1370) in the mitochondrial large subunit ribosomal RNA (mtLSU rRNA), a conserved modification in the peptidyl transferase domain of the mtLSU rRNA. Also required for formation of 2'-O-methyluridine at position 1369 (Um1369) mediated by MRM2. This Xenopus laevis (African clawed frog) protein is rRNA methyltransferase 3, mitochondrial.